A 136-amino-acid chain; its full sequence is Probable disulfide formation protein (136 aa).

Residues 7–26 (SYALYFAWAISCAGTLISIF) traverse the membrane as a helical segment. Cysteine 36 and cysteine 39 are oxidised to a cystine. 2 helical membrane passes run 41 to 60 (YQRI…AYRE) and 67 to 84 (YILP…YQVF). A disulfide bridge links cysteine 96 with cysteine 101. A helical transmembrane segment spans residues 109-131 (SYVTIPMASVVAFGAIVCLLVLT).

This sequence belongs to the DsbB family. BdbC subfamily.

The protein resides in the cell inner membrane. In terms of biological role, required for disulfide bond formation in some proteins. The chain is Probable disulfide formation protein from Chlamydia pneumoniae (Chlamydophila pneumoniae).